We begin with the raw amino-acid sequence, 431 residues long: Enolase (431 aa).

Gln-167 contacts (2R)-2-phosphoglycerate. The active-site Proton donor is Glu-209. 3 residues coordinate Mg(2+): Asp-246, Glu-290, and Asp-317. The (2R)-2-phosphoglycerate site is built by Lys-342, Arg-371, Ser-372, and Lys-393. Residue Lys-342 is the Proton acceptor of the active site.

The protein belongs to the enolase family. In terms of assembly, component of the RNA degradosome, a multiprotein complex involved in RNA processing and mRNA degradation. The cofactor is Mg(2+).

The protein localises to the cytoplasm. The protein resides in the secreted. It localises to the cell surface. It catalyses the reaction (2R)-2-phosphoglycerate = phosphoenolpyruvate + H2O. The protein operates within carbohydrate degradation; glycolysis; pyruvate from D-glyceraldehyde 3-phosphate: step 4/5. In terms of biological role, catalyzes the reversible conversion of 2-phosphoglycerate (2-PG) into phosphoenolpyruvate (PEP). It is essential for the degradation of carbohydrates via glycolysis. The protein is Enolase of Enterobacter sp. (strain 638).